Consider the following 251-residue polypeptide: Azurocidin (251 aa).

A signal peptide spans 1 to 19; that stretch reads MTRLTVLALLAGLLASSRA. Residues 20 to 26 constitute a propeptide, removed in mature form; sequence GSSPLLD. Residues 25 to 26 constitute a propeptide, dipeptide found in non-mature form; that stretch reads LD. Residues 27–244 enclose the Peptidase S1 domain; the sequence is IVGGRKARPR…FRDWIDGVLN (218 aa). The interval 46 to 70 is possesses antibiotic activity; it reads NQGRHFCGGALIHARFVMTAASCFQ. A disulfide bridge links cysteine 52 with cysteine 68. An N-linked (GlcNAc...) asparagine; partial glycan is attached at asparagine 126. Asparagine 140 carries N-linked (GlcNAc...) asparagine glycosylation. 3 cysteine pairs are disulfide-bonded: cysteine 149–cysteine 207, cysteine 180–cysteine 186, and cysteine 197–cysteine 222. Asparagine 171 carries an N-linked (GlcNAc...) asparagine; partial glycan. The propeptide at 249–251 is removed in mature form; sequence GPA.

It belongs to the peptidase S1 family. Elastase subfamily. Cleavage of the N-terminal propeptide which is composed of 7 amino acids occurs in two steps. The initial cleavage of 5 amino acids is followed by the cleavage of a dipeptide to produce the mature form.

It is found in the cytoplasmic granule membrane. In terms of biological role, this is a neutrophil granule-derived antibacterial and monocyte- and fibroblast-specific chemotactic glycoprotein. Binds heparin. The cytotoxic action is limited to many species of Gram-negative bacteria; this specificity may be explained by a strong affinity of the very basic N-terminal half for the negatively charged lipopolysaccharides that are unique to the Gram-negative bacterial outer envelope. It may play a role in mediating recruitment of monocytes in the second wave of inflammation. Has antibacterial activity against the Gram-negative bacterium P.aeruginosa, this activity is inhibited by LPS from P.aeruginosa. Acting alone, it does not have antimicrobial activity against the Gram-negative bacteria A.actinomycetemcomitans ATCC 29532, A.actinomycetemcomitans NCTC 9709, A.actinomycetemcomitans FDC-Y4, H.aphrophilus ATCC 13252, E.corrodens ATCC 23834, C.sputigena ATCC 33123, Capnocytophaga sp ATCC 33124, Capnocytophaga sp ATCC 27872 or E.coli ML-35. Has antibacterial activity against C.sputigena ATCC 33123 when acting synergistically with either elastase or cathepsin G. This Homo sapiens (Human) protein is Azurocidin.